Consider the following 485-residue polypeptide: N-succinylglutamate 5-semialdehyde dehydrogenase (485 aa).

Residue 220 to 225 participates in NAD(+) binding; the sequence is GSANTG. Active-site residues include Glu-243 and Cys-278.

Belongs to the aldehyde dehydrogenase family. AstD subfamily.

The enzyme catalyses N-succinyl-L-glutamate 5-semialdehyde + NAD(+) + H2O = N-succinyl-L-glutamate + NADH + 2 H(+). The protein operates within amino-acid degradation; L-arginine degradation via AST pathway; L-glutamate and succinate from L-arginine: step 4/5. Functionally, catalyzes the NAD-dependent reduction of succinylglutamate semialdehyde into succinylglutamate. The polypeptide is N-succinylglutamate 5-semialdehyde dehydrogenase (Aliivibrio salmonicida (strain LFI1238) (Vibrio salmonicida (strain LFI1238))).